Reading from the N-terminus, the 288-residue chain is UPF0494 membrane protein C212.04c (288 aa).

The next 4 membrane-spanning stretches (helical) occupy residues 107 to 127 (WVLLIIWSIITILTIDKKFKI), 144 to 164 (IWGPIVIYVGLFILLLSAFNY), 174 to 194 (PLISMVIAWVGVVIAAFSVII), and 198 to 218 (IAGVIAAFSVIITATIAGVIA).

It belongs to the UPF0494 family.

It localises to the cytoplasm. It is found in the endoplasmic reticulum. Its subcellular location is the membrane. In Schizosaccharomyces pombe (strain 972 / ATCC 24843) (Fission yeast), this protein is UPF0494 membrane protein C212.04c.